Reading from the N-terminus, the 78-residue chain is Large ribosomal subunit protein bL28 (78 aa).

The protein belongs to the bacterial ribosomal protein bL28 family.

This Shigella boydii serotype 4 (strain Sb227) protein is Large ribosomal subunit protein bL28.